The primary structure comprises 711 residues: T-box transcription factor TBX2 (711 aa).

Residues 109–287 (LEAKELWDQF…NNPFAKGFRD (179 aa)) constitute a DNA-binding region (T-box). Residues 313-449 (PERDGAESDA…GEGKEPSLAP (137 aa)) are disordered. Residues 326-340 (DPPPAREPPPSPSAA) show a composition bias toward pro residues. 3 positions are modified to phosphoserine: Ser-336, Ser-342, and Ser-360. Composition is skewed to basic and acidic residues over residues 363-372 (EPERTGEERS), 390-409 (TEPERSRERRSPERCSKEPT), and 421-444 (SLEKERPEARRKDEGRKDVGEGKE). The segment at 518–602 (GSGSSGGAGP…ATSAAAAAAA (85 aa)) is repression domain 1 (RD1). Ser-623, Ser-652, Ser-656, and Ser-675 each carry phosphoserine. Positions 640-687 (TGLAAEGSKGGNSREPSPLPELALRKVGGPSRGALSPSGSAKEAASEL) are disordered.

In terms of assembly, binds DNA as a monomer. Interacts with CHD4, HDAC1 and HDAC2, perhaps as components of a NuRD-like complex. Interacts with CBX3, HMGB2 and PBX1. Interacts with PML. Post-translationally, phosphorylated. May be phosphorylated by p38 MAPK in response to UV irradiation stress. In terms of tissue distribution, in adults, highest levels in lung. Also found in heart, kidney, and ovary.

Its subcellular location is the nucleus. Functionally, transcription factor which acts as a transcriptional repressor. May also function as a transcriptional activator. Binds to the palindromic T site 5'-TTCACACCTAGGTGTGAA-3' DNA sequence, or a half-site, which are present in the regulatory region of several genes. Required for cardiac atrioventricular canal formation. May cooperate with NKX2.5 to negatively modulate expression of NPPA/ANF in the atrioventricular canal. May play a role as a positive regulator of TGFB2 expression, perhaps acting in concert with GATA4 in the developing outflow tract myocardium. Plays a role in limb pattern formation. Acts as a transcriptional repressor of ADAM10 gene expression, perhaps in concert with histone deacetylase HDAC1 as cofactor. Involved in branching morphogenesis in both developing lungs and adult mammary glands, via negative modulation of target genes; acting redundantly with TBX3. Required, together with TBX3, to maintain cell proliferation in the embryonic lung mesenchyme; perhaps acting downstream of SHH, BMP and TGFbeta signaling. Involved in modulating early inner ear development, acting independently of, and also redundantly with TBX3, in different subregions of the developing ear. Acts as a negative regulator of PML function in cellular senescence. Acts as a negative regulator of expression of CDKN1A/p21, IL33 and CCN4; repression of CDKN1A is enhanced in response to UV-induced stress, perhaps as a result of phosphorylation by p38 MAPK. Negatively modulates expression of CDKN2A/p19ARF and CDH1/E-cadherin. Plays a role in induction of the epithelial-mesenchymal transition (EMT). Plays a role in melanocyte proliferation, perhaps via regulation of cyclin CCND1. Involved in melanogenesis, acting via negative modulation of expression of DHICA oxidase/TYRP1 and P protein/OCA2. Involved in regulating retinal pigment epithelium (RPE) cell proliferation, perhaps via negatively modulating transcription of the transcription factor CEBPD. This is T-box transcription factor TBX2 (Tbx2) from Mus musculus (Mouse).